A 178-amino-acid polypeptide reads, in one-letter code: Large ribosomal subunit protein uL6 (178 aa).

It belongs to the universal ribosomal protein uL6 family. Part of the 50S ribosomal subunit.

This protein binds to the 23S rRNA, and is important in its secondary structure. It is located near the subunit interface in the base of the L7/L12 stalk, and near the tRNA binding site of the peptidyltransferase center. This is Large ribosomal subunit protein uL6 from Limosilactobacillus fermentum (strain NBRC 3956 / LMG 18251) (Lactobacillus fermentum).